The chain runs to 492 residues: Auxin transporter-like protein 1 (492 aa).

Residues 1–67 (MVPREQAEEA…DAWFSCASNQ (67 aa)) are Cytoplasmic-facing. A helical membrane pass occupies residues 68 to 85 (VAQVLLTLPYSFSQLGML). The Extracellular segment spans residues 86–87 (SG). A helical membrane pass occupies residues 88–108 (VLLQLFYGFMGSWTAYLISVL). The Cytoplasmic portion of the chain corresponds to 109–143 (YVEYRSRKEKEGVSFKNHVIQWFEVLDGLLGPYWK). The chain crosses the membrane as a helical span at residues 144 to 164 (AAGLAFNCTFLLFGSVIQLIA). The Extracellular segment spans residues 165–180 (CASNIYYINDRLDKRT). A helical membrane pass occupies residues 181–201 (WTYIFGACCATTVFIPSFHNY). Residue Arg202 is a topological domain, cytoplasmic. A helical transmembrane segment spans residues 203 to 223 (IWSFLGLGMTTYTAWYLAIAA). Over 224-240 (LLNGQAEGITHTGPTKL) the chain is Extracellular. Residues 241-261 (VLYFTGATNILYTFGGHAVTV) form a helical membrane-spanning segment. Residues 262–274 (EIMHAMWKPAKFK) lie on the Cytoplasmic side of the membrane. Residues 275 to 295 (YIYLLATLYVFTLTLPSASAM) traverse the membrane as a helical segment. The Extracellular segment spans residues 296 to 322 (YWAFGDELLTHSNAFSLLPKTGWRDAA). A helical membrane pass occupies residues 323–343 (VILMLIHQFITFGFACTPLYF). The Cytoplasmic portion of the chain corresponds to 344–364 (VWEKVIGMHDTKSICLRALAR). A helical transmembrane segment spans residues 365–385 (LPIVVPIWFLAIIFPFFGPIN). Ser386 is a topological domain (extracellular). A helical membrane pass occupies residues 387-407 (AVGALLVSFTVYIIPALAHIL). Residues 408 to 432 (TYRTASARMNAAEKPPFFLPSWTGM) are Cytoplasmic-facing. Residues 433-453 (FVLNMFIVVWVLVVGFGLGGW) traverse the membrane as a helical segment. The Extracellular portion of the chain corresponds to 454-492 (ASMVNFIRQIDTFGLFAKCYQCPKPAPALAQSPVPLPHH).

Belongs to the amino acid/polyamine transporter 2 family. Amino acid/auxin permease (AAAP) (TC 2.A.18.1) subfamily.

Its subcellular location is the cell membrane. Its function is as follows. Carrier protein involved in proton-driven auxin influx. May mediate the formation of auxin gradient from developing leaves (site of auxin biosynthesis) to tips. This Oryza sativa subsp. japonica (Rice) protein is Auxin transporter-like protein 1.